Here is a 602-residue protein sequence, read N- to C-terminus: MKNLSFLINRRKENTSDSNVYPGKAKSHEPSWIEMDDQTKKDGLDIVHVEFSPDTRAPSDSNKVITEIFDATEDAKEADESERGMPLATALNTYPKAAAWSLLVSTTLIMEGYDTAILGAFYALPIFQRKFGSQNDKTGEWEISASWQIGLTLCYMAGEIVGLQLTGPSVDLVGNRYTLIIALFFLAAFTFILYFCNSLGMIAVGQALCGMPWGCFQCLTVSYASEICPLALRYYLTTYSNLCWLFGQLFAAGIMKNSQKKYADSELGYKLPFALQWILPVPLALGIFFAPESPWWLVKKGRFDEARRSLRRTLSGKGPEKEILVTLEVDKIKVTIDKEKRLTSKEGSYSDCFEDKINRRRTRITCLCWAGQATCGSILIGYSTYFYEKAGVSTEMSFTFSIIQYCLGICATFLSWWASKYFGRYDLYAFGLAFQTIVFFIIGGLGCSSTHGSKMGSGSLLMAVAFFYNLGIAPVVFCLVSEMPSSRLRTKTIILARNTYNVVSIICSVLILYQLNSKKWNWGAKSGFFWGVLCFCTLIWAVVDLPETAGKTFVEINELFKLGVSARKFKSTKVDPFVVKNTPKYVSHNDPKGDIEASIAEE.

Topologically, residues 1–106 are cytoplasmic; it reads MKNLSFLINR…AAAWSLLVST (106 aa). The helical transmembrane segment at 107–127 threads the bilayer; sequence TLIMEGYDTAILGAFYALPIF. Over 128 to 142 the chain is Extracellular; sequence QRKFGSQNDKTGEWE. The helical transmembrane segment at 143–163 threads the bilayer; sequence ISASWQIGLTLCYMAGEIVGL. Over 164–178 the chain is Cytoplasmic; sequence QLTGPSVDLVGNRYT. Residues 179-199 traverse the membrane as a helical segment; the sequence is LIIALFFLAAFTFILYFCNSL. Position 200 (Gly-200) is a topological domain, extracellular. Residues 201–221 form a helical membrane-spanning segment; it reads MIAVGQALCGMPWGCFQCLTV. At 222-234 the chain is on the cytoplasmic side; the sequence is SYASEICPLALRY. A helical membrane pass occupies residues 235 to 255; that stretch reads YLTTYSNLCWLFGQLFAAGIM. Over 256–270 the chain is Extracellular; the sequence is KNSQKKYADSELGYK. A helical transmembrane segment spans residues 271 to 291; sequence LPFALQWILPVPLALGIFFAP. The Cytoplasmic portion of the chain corresponds to 292 to 363; the sequence is ESPWWLVKKG…EDKINRRRTR (72 aa). The helical transmembrane segment at 364–384 threads the bilayer; sequence ITCLCWAGQATCGSILIGYST. The Extracellular segment spans residues 385-397; the sequence is YFYEKAGVSTEMS. Residues 398 to 418 form a helical membrane-spanning segment; that stretch reads FTFSIIQYCLGICATFLSWWA. Over 419 to 426 the chain is Cytoplasmic; that stretch reads SKYFGRYD. Residues 427 to 447 traverse the membrane as a helical segment; that stretch reads LYAFGLAFQTIVFFIIGGLGC. The Extracellular segment spans residues 448–459; sequence SSTHGSKMGSGS. The chain crosses the membrane as a helical span at residues 460 to 480; that stretch reads LLMAVAFFYNLGIAPVVFCLV. The Cytoplasmic segment spans residues 481–492; sequence SEMPSSRLRTKT. Residues 493–513 form a helical membrane-spanning segment; it reads IILARNTYNVVSIICSVLILY. Over 514 to 525 the chain is Extracellular; sequence QLNSKKWNWGAK. A helical membrane pass occupies residues 526–546; sequence SGFFWGVLCFCTLIWAVVDLP. The Cytoplasmic segment spans residues 547-602; the sequence is ETAGKTFVEINELFKLGVSARKFKSTKVDPFVVKNTPKYVSHNDPKGDIEASIAEE.

It belongs to the major facilitator superfamily. Sugar transporter (TC 2.A.1.1) family.

The protein resides in the cell membrane. Its function is as follows. High-affinity uptake of maltose and maltotriose. Also transports alpha-methylglucoside, glucose and turanose but not melezitose or trehalose. The polypeptide is Alpha-glucosides permease MPH3 (MPH3) (Saccharomyces cerevisiae (strain YJM789) (Baker's yeast)).